The primary structure comprises 145 residues: Probable transport accessory protein MmpS2 (145 aa).

Residues Met11–Leu31 traverse the membrane as a helical segment.

This sequence belongs to the MmpS family.

The protein resides in the cell membrane. The sequence is that of Probable transport accessory protein MmpS2 (mmpS2) from Mycobacterium bovis (strain ATCC BAA-935 / AF2122/97).